The following is a 90-amino-acid chain: Molybdopterin synthase sulfur carrier subunit (90 aa).

Gly90 is modified (1-thioglycine; alternate). Residue Gly90 is modified to Glycyl adenylate; alternate.

This sequence belongs to the MoaD family. MOCS2A subfamily. In terms of assembly, heterotetramer; composed of 2 small (Mocs2A) and 2 large (Mocs2B) subunits. C-terminal thiocarboxylation occurs in 2 steps, it is first acyl-adenylated (-COAMP) via the hesA/moeB/thiF part of MOCS3, then thiocarboxylated (-COSH) via the rhodanese domain of MOCS3.

Its subcellular location is the cytoplasm. It functions in the pathway cofactor biosynthesis; molybdopterin biosynthesis. Its function is as follows. Acts as a sulfur carrier required for molybdopterin biosynthesis. Component of the molybdopterin synthase complex that catalyzes the conversion of precursor Z into molybdopterin by mediating the incorporation of 2 sulfur atoms into precursor Z to generate a dithiolene group. In the complex, serves as sulfur donor by being thiocarboxylated (-COSH) at its C-terminus by MOCS3. After interaction with Mocs2B, the sulfur is then transferred to precursor Z to form molybdopterin. The protein is Molybdopterin synthase sulfur carrier subunit of Drosophila yakuba (Fruit fly).